The primary structure comprises 215 residues: ATP phosphoribosyltransferase (215 aa).

This sequence belongs to the ATP phosphoribosyltransferase family. Short subfamily. In terms of assembly, heteromultimer composed of HisG and HisZ subunits.

The protein resides in the cytoplasm. The enzyme catalyses 1-(5-phospho-beta-D-ribosyl)-ATP + diphosphate = 5-phospho-alpha-D-ribose 1-diphosphate + ATP. It functions in the pathway amino-acid biosynthesis; L-histidine biosynthesis; L-histidine from 5-phospho-alpha-D-ribose 1-diphosphate: step 1/9. Catalyzes the condensation of ATP and 5-phosphoribose 1-diphosphate to form N'-(5'-phosphoribosyl)-ATP (PR-ATP). Has a crucial role in the pathway because the rate of histidine biosynthesis seems to be controlled primarily by regulation of HisG enzymatic activity. The chain is ATP phosphoribosyltransferase from Prochlorococcus marinus subsp. pastoris (strain CCMP1986 / NIES-2087 / MED4).